Consider the following 96-residue polypeptide: Aspartyl/glutamyl-tRNA(Asn/Gln) amidotransferase subunit C (96 aa).

The protein belongs to the GatC family. As to quaternary structure, heterotrimer of A, B and C subunits.

It catalyses the reaction L-glutamyl-tRNA(Gln) + L-glutamine + ATP + H2O = L-glutaminyl-tRNA(Gln) + L-glutamate + ADP + phosphate + H(+). The enzyme catalyses L-aspartyl-tRNA(Asn) + L-glutamine + ATP + H2O = L-asparaginyl-tRNA(Asn) + L-glutamate + ADP + phosphate + 2 H(+). In terms of biological role, allows the formation of correctly charged Asn-tRNA(Asn) or Gln-tRNA(Gln) through the transamidation of misacylated Asp-tRNA(Asn) or Glu-tRNA(Gln) in organisms which lack either or both of asparaginyl-tRNA or glutaminyl-tRNA synthetases. The reaction takes place in the presence of glutamine and ATP through an activated phospho-Asp-tRNA(Asn) or phospho-Glu-tRNA(Gln). The chain is Aspartyl/glutamyl-tRNA(Asn/Gln) amidotransferase subunit C from Leptospira interrogans serogroup Icterohaemorrhagiae serovar copenhageni (strain Fiocruz L1-130).